The primary structure comprises 81 residues: Probable antimicrobial peptide Con13 (81 aa).

The first 22 residues, 1–22 (MNRKLLLVFLVVAMLVMQPAEA), serve as a signal peptide directing secretion. The propeptide occupies 66-81 (EAGQIPFDEFMDVLYS).

The protein belongs to the non-disulfide-bridged peptide (NDBP) superfamily. Long chain multifunctional peptide (group 2) family. As to expression, expressed by the venom gland.

It localises to the secreted. The protein localises to the target cell membrane. At high concentrations, acts as a pore former in cellular membranes and causes the leakage of the cells. At submicromolar concentrations, degranulates granulocytes and has a weak hemolytic activity against human erythrocytes. Also strongly inhibits the production of superoxide anions. Has a strong antibacterial activity against Gram-negative bacteria but is less active against Gram-positive bacteria. Also has antifungal activity. This chain is Probable antimicrobial peptide Con13, found in Opisthacanthus cayaporum (South American scorpion).